Reading from the N-terminus, the 150-residue chain is Large ribosomal subunit protein bL9 (150 aa).

It belongs to the bacterial ribosomal protein bL9 family.

Functionally, binds to the 23S rRNA. This Wolinella succinogenes (strain ATCC 29543 / DSM 1740 / CCUG 13145 / JCM 31913 / LMG 7466 / NCTC 11488 / FDC 602W) (Vibrio succinogenes) protein is Large ribosomal subunit protein bL9.